Here is a 505-residue protein sequence, read N- to C-terminus: Putative thymidine phosphorylase (505 aa).

This sequence belongs to the thymidine/pyrimidine-nucleoside phosphorylase family. Type 2 subfamily.

It catalyses the reaction thymidine + phosphate = 2-deoxy-alpha-D-ribose 1-phosphate + thymine. In Tolumonas auensis (strain DSM 9187 / NBRC 110442 / TA 4), this protein is Putative thymidine phosphorylase.